The sequence spans 419 residues: E3 ubiquitin-protein ligase RNFT1 (419 aa).

The interval 1 to 120 (MKLRAQFDRG…SGESDLESGE (120 aa)) is disordered. Composition is skewed to polar residues over residues 31–44 (EPSS…SLTL) and 72–82 (GSSSGSTNGRG). A compositionally biased stretch (basic residues) spans 84–102 (TSRRMRTASHSHSHTHGHG). The next 6 helical transmembrane spans lie at 141–161 (FIVI…AVAV), 187–207 (LHCA…FYTF), 217–237 (FFAN…SVGV), 240–260 (FILK…PCPL), 270–290 (YMLI…PLWF), and 303–323 (VGLT…LLAL). The interval 352 to 403 (IREAGDICPICQADFKQPRVLVCQHIFCEECIAQWLNQERTCPLCRTVITDK) is required for ubiquitin ligase activity and for protection against ER stress-induced cell death. The RING-type zinc finger occupies 359–397 (CPICQADFKQPRVLVCQHIFCEECIAQWLNQERTCPLCR).

It localises to the endoplasmic reticulum membrane. It catalyses the reaction S-ubiquitinyl-[E2 ubiquitin-conjugating enzyme]-L-cysteine + [acceptor protein]-L-lysine = [E2 ubiquitin-conjugating enzyme]-L-cysteine + N(6)-ubiquitinyl-[acceptor protein]-L-lysine.. It participates in protein modification; protein ubiquitination. Its function is as follows. E3 ubiquitin-protein ligase that acts in the endoplasmic reticulum (ER)-associated degradation (ERAD) pathway, which targets misfolded proteins that accumulate in the endoplasmic reticulum (ER) for ubiquitination and subsequent proteasome-mediated degradation. Protects cells from ER stress-induced apoptosis. The sequence is that of E3 ubiquitin-protein ligase RNFT1 (rnft1) from Danio rerio (Zebrafish).